The chain runs to 283 residues: Large ribosomal subunit protein mL46 (283 aa).

The residue at position 217 (K217) is an N6-succinyllysine. An N6-acetyllysine modification is found at K228. Position 246 is an N6-succinyllysine (K246).

This sequence belongs to the mitochondrion-specific ribosomal protein mL46 family. In terms of assembly, component of the mitochondrial ribosome large subunit (39S) which comprises a 16S rRNA and about 50 distinct proteins.

The protein localises to the mitochondrion. This Mus musculus (Mouse) protein is Large ribosomal subunit protein mL46 (Mrpl46).